The chain runs to 346 residues: Probable dual-specificity RNA methyltransferase RlmN (346 aa).

Catalysis depends on E90, which acts as the Proton acceptor. Positions 96–330 constitute a Radical SAM core domain; that stretch reads TRDRLTVCVS…VSVRASRGLD (235 aa). Cysteines 103 and 335 form a disulfide. [4Fe-4S] cluster-binding residues include C110, C114, and C117. S-adenosyl-L-methionine-binding positions include 157–158, S187, 216–218, and N292; these read GE and SLH. C335 acts as the S-methylcysteine intermediate in catalysis.

This sequence belongs to the radical SAM superfamily. RlmN family. It depends on [4Fe-4S] cluster as a cofactor.

The protein resides in the cytoplasm. It catalyses the reaction adenosine(2503) in 23S rRNA + 2 reduced [2Fe-2S]-[ferredoxin] + 2 S-adenosyl-L-methionine = 2-methyladenosine(2503) in 23S rRNA + 5'-deoxyadenosine + L-methionine + 2 oxidized [2Fe-2S]-[ferredoxin] + S-adenosyl-L-homocysteine. The enzyme catalyses adenosine(37) in tRNA + 2 reduced [2Fe-2S]-[ferredoxin] + 2 S-adenosyl-L-methionine = 2-methyladenosine(37) in tRNA + 5'-deoxyadenosine + L-methionine + 2 oxidized [2Fe-2S]-[ferredoxin] + S-adenosyl-L-homocysteine. In terms of biological role, specifically methylates position 2 of adenine 2503 in 23S rRNA and position 2 of adenine 37 in tRNAs. The chain is Probable dual-specificity RNA methyltransferase RlmN from Synechococcus sp. (strain RCC307).